The primary structure comprises 363 residues: UDP-N-acetylglucosamine--N-acetylmuramyl-(pentapeptide) pyrophosphoryl-undecaprenol N-acetylglucosamine transferase (363 aa).

UDP-N-acetyl-alpha-D-glucosamine contacts are provided by residues 16-18 (TGG), Asn-128, Arg-167, Ser-195, Ile-249, 268-273 (ALTVSE), and Gln-294.

The protein belongs to the glycosyltransferase 28 family. MurG subfamily.

It is found in the cell inner membrane. The enzyme catalyses di-trans,octa-cis-undecaprenyl diphospho-N-acetyl-alpha-D-muramoyl-L-alanyl-D-glutamyl-meso-2,6-diaminopimeloyl-D-alanyl-D-alanine + UDP-N-acetyl-alpha-D-glucosamine = di-trans,octa-cis-undecaprenyl diphospho-[N-acetyl-alpha-D-glucosaminyl-(1-&gt;4)]-N-acetyl-alpha-D-muramoyl-L-alanyl-D-glutamyl-meso-2,6-diaminopimeloyl-D-alanyl-D-alanine + UDP + H(+). The protein operates within cell wall biogenesis; peptidoglycan biosynthesis. Functionally, cell wall formation. Catalyzes the transfer of a GlcNAc subunit on undecaprenyl-pyrophosphoryl-MurNAc-pentapeptide (lipid intermediate I) to form undecaprenyl-pyrophosphoryl-MurNAc-(pentapeptide)GlcNAc (lipid intermediate II). This chain is UDP-N-acetylglucosamine--N-acetylmuramyl-(pentapeptide) pyrophosphoryl-undecaprenol N-acetylglucosamine transferase, found in Marinobacter nauticus (strain ATCC 700491 / DSM 11845 / VT8) (Marinobacter aquaeolei).